A 223-amino-acid polypeptide reads, in one-letter code: Serine/threonine/tyrosine-interacting protein (223 aa).

The Tyrosine-protein phosphatase domain occupies 28 to 176 (EMQEVLPGLF…LQEYEAIYLA (149 aa)). The short motif at 76-78 (FQQ) is the Interaction with FBXW7 element. Phosphoserine is present on residues Ser184 and Ser201. The tract at residues 199 to 223 (TGSVKRTHEEDDDFGNMQVATAQNG) is disordered.

It belongs to the protein-tyrosine phosphatase family. Non-receptor class subfamily. Interacts with MAPK1; independently of MAPK1 phosphorylation status. Interacts with CARHSP1/Crhsp-24. Interacts (via FQQ motif) with FBXW7 (via F-box domain); the interaction is direct and prevents FBXW7 interaction with SKP1, a component of the SCF(FBXW7) complex. In terms of tissue distribution, widely expressed with highest levels in muscle, testis and brain. In testis, expression starts 13-14 days after birth and is limited to the seminiferous tubule and to round and elongating spermatids. Expression is low in condensing spermatids and pachytene spermatocytes, and absent in spermatogonia, spermatozoa and somatic Sertoli cells.

It localises to the nucleus. The protein resides in the cytoplasm. The protein localises to the cytosol. Functionally, catalytically inactive phosphatase. Acts as a nuclear anchor for MAPK1/MAPK3 (ERK1/ERK2). Modulates cell-fate decisions and cell migration by spatiotemporal regulation of MAPK1/MAPK3 (ERK1/ERK2). By binding to the F-box of FBXW7, prevents the assembly of FBXW7 into the SCF E3 ubiquitin-protein ligase complex, and thereby inhibits degradation of its substrates. Plays a role in spermatogenesis. This chain is Serine/threonine/tyrosine-interacting protein, found in Mus musculus (Mouse).